The sequence spans 142 residues: Large ribosomal subunit protein bL17 (142 aa).

This sequence belongs to the bacterial ribosomal protein bL17 family. In terms of assembly, part of the 50S ribosomal subunit. Contacts protein L32.

The sequence is that of Large ribosomal subunit protein bL17 from Wolbachia sp. subsp. Brugia malayi (strain TRS).